We begin with the raw amino-acid sequence, 412 residues long: MTNKKELKDVQVKGKKVLVRVDFNVPMKDGQVTDDNRIIAALPTIKYLIAQEAKVILFSHLGKVKTADDLEKRDMAPVAKVLEQKLGQPVKFINAFEGKQLEEAINEMHNKEVILFQNTRFADIINSNGQISVDSEGKAAAKRESKNDSALGKYWASLGDVFVNDAFGTAHRAHASNVGIAENITESCLGFLVEKEVKMLSQCVDNPVKPFVAIIGGAKVSDKIGVIEHLLTKADKILIGGGMAYTFFAAQGHKIGNSLLEVDKVEIAKTFLAKGQGKIILPIDALEAPEFADVPAKVTTGFDIDDGYMGLDIGPKTIELFKKELADAKTVTWNGPMGVFEFKNYSIGTKAVCEAIAELKGAFTLIGGGDSAAAAIQLGYKDKFTHISTGGGASLEYMEGKPLPGIEAVQSK.

Substrate-binding positions include 22-24, Arg37, 60-63, Arg120, and Arg172; these read DFN and HLGK. ATP is bound by residues Lys223, Gly310, Glu341, and 368–371; that span reads GGDS.

The protein belongs to the phosphoglycerate kinase family. In terms of assembly, monomer.

It is found in the cytoplasm. The catalysed reaction is (2R)-3-phosphoglycerate + ATP = (2R)-3-phospho-glyceroyl phosphate + ADP. The protein operates within carbohydrate degradation; glycolysis; pyruvate from D-glyceraldehyde 3-phosphate: step 2/5. This chain is Phosphoglycerate kinase, found in Spiroplasma citri.